Here is a 582-residue protein sequence, read N- to C-terminus: 2-succinyl-5-enolpyruvyl-6-hydroxy-3-cyclohexene-1-carboxylate synthase (582 aa).

Belongs to the TPP enzyme family. MenD subfamily. In terms of assembly, homodimer. It depends on Mg(2+) as a cofactor. Mn(2+) serves as cofactor. Thiamine diphosphate is required as a cofactor.

The enzyme catalyses isochorismate + 2-oxoglutarate + H(+) = 5-enolpyruvoyl-6-hydroxy-2-succinyl-cyclohex-3-ene-1-carboxylate + CO2. It functions in the pathway quinol/quinone metabolism; 1,4-dihydroxy-2-naphthoate biosynthesis; 1,4-dihydroxy-2-naphthoate from chorismate: step 2/7. It participates in cofactor biosynthesis; phylloquinone biosynthesis. Catalyzes the thiamine diphosphate-dependent decarboxylation of 2-oxoglutarate and the subsequent addition of the resulting succinic semialdehyde-thiamine pyrophosphate anion to isochorismate to yield 2-succinyl-5-enolpyruvyl-6-hydroxy-3-cyclohexene-1-carboxylate (SEPHCHC). The sequence is that of 2-succinyl-5-enolpyruvyl-6-hydroxy-3-cyclohexene-1-carboxylate synthase from Trichodesmium erythraeum (strain IMS101).